A 102-amino-acid polypeptide reads, in one-letter code: uncharacterized protein (102 aa).

The next 2 membrane-spanning stretches (helical) occupy residues 38–58 and 64–84; these read FYVWSSRIYVLVLVVQAQLIL and VLFLLLFFLHNFFLLPQLFQF.

The protein resides in the membrane. This is an uncharacterized protein from Saccharomyces cerevisiae (strain ATCC 204508 / S288c) (Baker's yeast).